Reading from the N-terminus, the 372-residue chain is GTPase Obg (372 aa).

Positions 1–159 (MKFVDEATIE…RRLRLELKVL (159 aa)) constitute an Obg domain. The 177-residue stretch at 160–336 (ADVGLLGLPN…LIWALQDYLD (177 aa)) folds into the OBG-type G domain. GTP contacts are provided by residues 166–173 (GLPNAGKS), 191–195 (FTTLH), 213–216 (DIPG), 288–291 (NKLD), and 317–319 (SGL). Ser173 and Thr193 together coordinate Mg(2+). Positions 341 to 372 (KEQITQDKADGSYVHEDPRFDTTRDAPPSGKD) are disordered.

This sequence belongs to the TRAFAC class OBG-HflX-like GTPase superfamily. OBG GTPase family. In terms of assembly, monomer. The cofactor is Mg(2+).

Its subcellular location is the cytoplasm. Its function is as follows. An essential GTPase which binds GTP, GDP and possibly (p)ppGpp with moderate affinity, with high nucleotide exchange rates and a fairly low GTP hydrolysis rate. Plays a role in control of the cell cycle, stress response, ribosome biogenesis and in those bacteria that undergo differentiation, in morphogenesis control. The protein is GTPase Obg of Bordetella avium (strain 197N).